A 44-amino-acid chain; its full sequence is Phosphatase RapE inhibitor (44 aa).

2 consecutive propeptides follow at residues methionine 1 to alanine 30 and leucine 36 to valine 44.

This sequence belongs to the Phr family. In terms of processing, contains a predicted signal peptide cleavage site in the N-terminal region, however the propeptide is probably only subject to processing events at the ends of the mature peptide.

The protein localises to the secreted. It is found in the cytoplasm. Functionally, signaling molecule involved in the regulation of sporulation. Secreted during production, but the mature peptide acts intracellularly, indicating that it needs to be imported into the cell to function. Inhibitor of the RapE phosphatase activity. Does not inhibit the phosphatase activity of RapA and RapB. Probably plays a dispensable role in the overall context of sporulation initiation. The chain is Phosphatase RapE inhibitor (phrE) from Bacillus subtilis (strain 168).